The chain runs to 898 residues: Dipeptidyl peptidase 8 (898 aa).

Catalysis depends on charge relay system residues Ser755, Asp833, and His865.

The protein belongs to the peptidase S9B family. DPPIV subfamily. Homodimer. Forms a ternary complex with NLRP1, composed of a DPP8 homodimer, one full-length NLRP1 protein, and one cleaved C-terminus of NLRP1 (NACHT, LRR and PYD domains-containing protein 1, C-terminus). Forms a ternary complex with CARD8, composed of a DPP8 homodimer, one full-length NLRP1 protein, and one cleaved C-terminus of CARD8 (Caspase recruitment domain-containing protein 8, C-terminus). In the ternary complex, only one subunit of the DPP8 homodimer is bound to NLRP1 or CARD8. As to expression, ubiquitously expressed, with highest levels in testis, placenta, prostate, muscle and brain.

The protein localises to the cytoplasm. The catalysed reaction is Release of an N-terminal dipeptide, Xaa-Yaa-|-Zaa-, from a polypeptide, preferentially when Yaa is Pro, provided Zaa is neither Pro nor hydroxyproline.. Inhibited by zinc. Inhibited by the serine proteinase inhibitor 4-(2-aminoethyl)benzenesulphonyl fluoride (AEBSF), and by di-isopropylfluorophosphate. Specifically inhibited by isoindoline derivatives. Inhibited by Val-boroPro (Talabostat, PT-100), a non-selective inhibitor, which triggers pyroptosis in monocytes and macrophages. In terms of biological role, dipeptidyl peptidase that cleaves off N-terminal dipeptides from proteins having a Pro or Ala residue at position 2. Acts as a key inhibitor of caspase-1-dependent monocyte and macrophage pyroptosis in resting cells by preventing activation of NLRP1 and CARD8. Sequesters the cleaved C-terminal part of NLRP1 and CARD8, which respectively constitute the active part of the NLRP1 and CARD8 inflammasomes, in a ternary complex, thereby preventing their oligomerization and activation. The dipeptidyl peptidase activity is required to suppress NLRP1 and CARD8; however, neither NLRP1 nor CARD8 are bona fide substrates of DPP8, suggesting the existence of substrate(s) required for NLRP1 and CARD8 inhibition. This is Dipeptidyl peptidase 8 from Homo sapiens (Human).